A 197-amino-acid polypeptide reads, in one-letter code: MSRYRGPRLKKIRRLGALPGLTNKSPRAIRDLRNNSRSEYRIRLEEKQKLRFHYGLTEKQLINYVQIARKAKGSTGKVLLQLLEMRLDNILFRLGMASTIXAARQLVNHRHVLVNGRLVNRPSYRCKPHDIIMPKNTTKSGVLVQNSLELFTGKELANHLNLFSTPYKGLVNKIVDTNWIGLKINELLVVEYYSRQA.

The region spanning 85–161 (MRLDNILFRL…TGKELANHLN (77 aa)) is the S4 RNA-binding domain.

This sequence belongs to the universal ribosomal protein uS4 family. In terms of assembly, part of the 30S ribosomal subunit. Contacts protein S5. The interaction surface between S4 and S5 is involved in control of translational fidelity.

Its subcellular location is the plastid. One of the primary rRNA binding proteins, it binds directly to 16S rRNA where it nucleates assembly of the body of the 30S subunit. Functionally, with S5 and S12 plays an important role in translational accuracy. The protein is Small ribosomal subunit protein uS4c (rps4) of Cuscuta sandwichiana (Kauna'oa).